Reading from the N-terminus, the 1005-residue chain is Ephrin type-A receptor 5 (1005 aa).

Positions 1-24 (MRGSGPRGAGRRRTQGRGGGGDTP) are disordered. The signal sequence occupies residues 1–26 (MRGSGPRGAGRRRTQGRGGGGDTPRV). Residues 27 to 575 (PASLAGCYSA…GASNDQSQIP (549 aa)) are Extracellular-facing. The region spanning 62–240 (EVNLLDSRTV…YYKKCPSVVR (179 aa)) is the Eph LBD domain. 6 N-linked (GlcNAc...) asparagine glycosylation sites follow: asparagine 266, asparagine 301, asparagine 371, asparagine 425, asparagine 438, and asparagine 463. 2 Fibronectin type-III domains span residues 359–469 (PPSA…TNQA) and 470–564 (APSP…TTPV). Residues 576 to 596 (IIGVSVTVGVILLAVMIGFLL) form a helical membrane-spanning segment. Topologically, residues 597–1005 (SGSCCECGCG…MDAVAQVTLE (409 aa)) are cytoplasmic. 2 positions are modified to phosphotyrosine; by autocatalysis: tyrosine 652 and tyrosine 658. Residues 677–938 (ITIERVIGAG…DIVNMLDKLI (262 aa)) form the Protein kinase domain. ATP contacts are provided by residues 683-691 (IGAGEFGEV) and lysine 709. The Proton acceptor role is filled by aspartate 802. Phosphotyrosine; by autocatalysis is present on residues tyrosine 835 and tyrosine 984. In terms of domain architecture, SAM spans 967–1005 (GAYRSVGEWLEATKMGRYTEIFMENGYSSMDAVAQVTLE).

This sequence belongs to the protein kinase superfamily. Tyr protein kinase family. Ephrin receptor subfamily. In terms of assembly, heterotetramer upon binding of the ligand. The heterotetramer is composed of an ephrin dimer and a receptor dimer. Oligomerization is probably required to induce biological responses. Interacts (via SAM domain) with SAMD5 (via SAM domain). Phosphorylated. Phosphorylation is stimulated by the ligand EFNA5. Dephosphorylation upon stimulation by glucose, inhibits EPHA5 forward signaling and results in insulin secretion. As to expression, almost exclusively expressed in the nervous system. Predominantly expressed in neurons.

It localises to the cell membrane. The protein localises to the cell projection. It is found in the axon. The protein resides in the dendrite. It carries out the reaction L-tyrosyl-[protein] + ATP = O-phospho-L-tyrosyl-[protein] + ADP + H(+). Functionally, receptor tyrosine kinase which binds promiscuously GPI-anchored ephrin-A family ligands residing on adjacent cells, leading to contact-dependent bidirectional signaling into neighboring cells. The signaling pathway downstream of the receptor is referred to as forward signaling while the signaling pathway downstream of the ephrin ligand is referred to as reverse signaling. Among GPI-anchored ephrin-A ligands, EFNA5 most probably constitutes the cognate/functional ligand for EPHA5. Functions as an axon guidance molecule during development and may be involved in the development of the retinotectal, entorhino-hippocampal and hippocamposeptal pathways. Together with EFNA5 plays also a role in synaptic plasticity in adult brain through regulation of synaptogenesis. In addition to its function in the nervous system, the interaction of EPHA5 with EFNA5 mediates communication between pancreatic islet cells to regulate glucose-stimulated insulin secretion. In Rattus norvegicus (Rat), this protein is Ephrin type-A receptor 5 (Epha5).